The primary structure comprises 224 residues: Lipoprotein-releasing system ATP-binding protein LolD (224 aa).

The region spanning 4-224 (LSIRNVFKSY…RLAGGEVSEA (221 aa)) is the ABC transporter domain. Position 40 to 47 (40 to 47 (GASGAGKS)) interacts with ATP.

Belongs to the ABC transporter superfamily. Lipoprotein translocase (TC 3.A.1.125) family. In terms of assembly, the complex is composed of two ATP-binding proteins (LolD) and two transmembrane proteins (LolC and LolE).

It localises to the cell inner membrane. Part of the ABC transporter complex LolCDE involved in the translocation of mature outer membrane-directed lipoproteins, from the inner membrane to the periplasmic chaperone, LolA. Responsible for the formation of the LolA-lipoprotein complex in an ATP-dependent manner. This Myxococcus xanthus (strain DK1622) protein is Lipoprotein-releasing system ATP-binding protein LolD.